Consider the following 102-residue polypeptide: RNA-binding protein Hfq (102 aa).

Residues 9 to 68 enclose the Sm domain; it reads DPFLNALRRERVPVSIYLVNGIKLQGQIESFDQFVILLKNTVSQMVYKHAISTVVPSRPV. Residues 63 to 102 form a disordered region; the sequence is VPSRPVSHHSNNAGGSTSSNYHHGSSAQNTSAQQDSEENE. Residues 70-96 show a composition bias toward polar residues; that stretch reads HHSNNAGGSTSSNYHHGSSAQNTSAQQ.

This sequence belongs to the Hfq family. In terms of assembly, homohexamer.

RNA chaperone that binds small regulatory RNA (sRNAs) and mRNAs to facilitate mRNA translational regulation in response to envelope stress, environmental stress and changes in metabolite concentrations. Also binds with high specificity to tRNAs. The chain is RNA-binding protein Hfq from Escherichia coli O17:K52:H18 (strain UMN026 / ExPEC).